A 427-amino-acid polypeptide reads, in one-letter code: Septin-8-A (427 aa).

The region spanning 39-305 is the Septin-type G domain; that stretch reads QGFCFNILCV…ELYRRCKLEE (267 aa). Positions 49-56 are G1 motif; sequence GETGIGKS. Residues 49–56, Gly104, 185–193, Gly239, and Arg254 each bind GTP; these read GETGIGKS and KADTISKSE. Residues 101–104 form a G3 motif region; sequence DTVG. A G4 motif region spans residues 184–187; the sequence is AKAD. A coiled-coil region spans residues 320–409; that stretch reads LQETYEAKRK…KAAMEALQSQ (90 aa). Positions 376 to 389 are enriched in basic and acidic residues; that stretch reads QEESKKVEDKRRDL. Residues 376 to 427 are disordered; that stretch reads QEESKKVEDKRRDLEEEMNSFNRRKAAMEALQSQSFQATSQQPLKKDKDRKN. A compositionally biased stretch (polar residues) spans 406-418; that stretch reads LQSQSFQATSQQP.

The protein belongs to the TRAFAC class TrmE-Era-EngA-EngB-Septin-like GTPase superfamily. Septin GTPase family.

The chain is Septin-8-A (sept8-a) from Xenopus laevis (African clawed frog).